The sequence spans 423 residues: Imidazolonepropionase (423 aa).

Fe(3+)-binding residues include histidine 78 and histidine 80. 2 residues coordinate Zn(2+): histidine 78 and histidine 80. 3 residues coordinate 4-imidazolone-5-propanoate: arginine 87, tyrosine 150, and histidine 183. Tyrosine 150 lines the N-formimidoyl-L-glutamate pocket. Fe(3+) is bound at residue histidine 247. Histidine 247 contacts Zn(2+). Glutamate 250 provides a ligand contact to 4-imidazolone-5-propanoate. Aspartate 322 is a binding site for Fe(3+). Residue aspartate 322 coordinates Zn(2+). The N-formimidoyl-L-glutamate site is built by asparagine 324 and glycine 326. Residue serine 327 participates in 4-imidazolone-5-propanoate binding.

This sequence belongs to the metallo-dependent hydrolases superfamily. HutI family. Zn(2+) serves as cofactor. Requires Fe(3+) as cofactor.

Its subcellular location is the cytoplasm. The catalysed reaction is 4-imidazolone-5-propanoate + H2O = N-formimidoyl-L-glutamate. The protein operates within amino-acid degradation; L-histidine degradation into L-glutamate; N-formimidoyl-L-glutamate from L-histidine: step 3/3. In terms of biological role, catalyzes the hydrolytic cleavage of the carbon-nitrogen bond in imidazolone-5-propanoate to yield N-formimidoyl-L-glutamate. It is the third step in the universal histidine degradation pathway. The sequence is that of Imidazolonepropionase from Bacillus thuringiensis (strain Al Hakam).